We begin with the raw amino-acid sequence, 408 residues long: Dual-specificity RNA methyltransferase RlmN (408 aa).

Residue glutamate 122 is the Proton acceptor of the active site. The Radical SAM core domain maps to 128-369 (EEDRGTLCIS…NRAGYASPIR (242 aa)). A disulfide bridge connects residues cysteine 135 and cysteine 380. Residues cysteine 142, cysteine 146, and cysteine 149 each contribute to the [4Fe-4S] cluster site. S-adenosyl-L-methionine is bound by residues 206–207 (GE), serine 238, 260–262 (SLH), and asparagine 337. Cysteine 380 serves as the catalytic S-methylcysteine intermediate.

The protein belongs to the radical SAM superfamily. RlmN family. [4Fe-4S] cluster serves as cofactor.

The protein resides in the cytoplasm. It catalyses the reaction adenosine(2503) in 23S rRNA + 2 reduced [2Fe-2S]-[ferredoxin] + 2 S-adenosyl-L-methionine = 2-methyladenosine(2503) in 23S rRNA + 5'-deoxyadenosine + L-methionine + 2 oxidized [2Fe-2S]-[ferredoxin] + S-adenosyl-L-homocysteine. The catalysed reaction is adenosine(37) in tRNA + 2 reduced [2Fe-2S]-[ferredoxin] + 2 S-adenosyl-L-methionine = 2-methyladenosine(37) in tRNA + 5'-deoxyadenosine + L-methionine + 2 oxidized [2Fe-2S]-[ferredoxin] + S-adenosyl-L-homocysteine. Specifically methylates position 2 of adenine 2503 in 23S rRNA and position 2 of adenine 37 in tRNAs. m2A2503 modification seems to play a crucial role in the proofreading step occurring at the peptidyl transferase center and thus would serve to optimize ribosomal fidelity. This chain is Dual-specificity RNA methyltransferase RlmN, found in Chelativorans sp. (strain BNC1).